The primary structure comprises 346 residues: tRNA N6-adenosine threonylcarbamoyltransferase (346 aa).

Fe cation contacts are provided by histidine 117 and histidine 121. Residues 139-143 (QVSGG), aspartate 172, glycine 185, aspartate 189, and asparagine 278 contribute to the substrate site. A Fe cation-binding site is contributed by aspartate 308.

Belongs to the KAE1 / TsaD family. The cofactor is Fe(2+).

The protein localises to the cytoplasm. It carries out the reaction L-threonylcarbamoyladenylate + adenosine(37) in tRNA = N(6)-L-threonylcarbamoyladenosine(37) in tRNA + AMP + H(+). Required for the formation of a threonylcarbamoyl group on adenosine at position 37 (t(6)A37) in tRNAs that read codons beginning with adenine. Is involved in the transfer of the threonylcarbamoyl moiety of threonylcarbamoyl-AMP (TC-AMP) to the N6 group of A37, together with TsaE and TsaB. TsaD likely plays a direct catalytic role in this reaction. This chain is tRNA N6-adenosine threonylcarbamoyltransferase, found in Lactobacillus delbrueckii subsp. bulgaricus (strain ATCC 11842 / DSM 20081 / BCRC 10696 / JCM 1002 / NBRC 13953 / NCIMB 11778 / NCTC 12712 / WDCM 00102 / Lb 14).